The primary structure comprises 342 residues: S-adenosylmethionine:tRNA ribosyltransferase-isomerase (342 aa).

This sequence belongs to the QueA family. As to quaternary structure, monomer.

It localises to the cytoplasm. The catalysed reaction is 7-aminomethyl-7-carbaguanosine(34) in tRNA + S-adenosyl-L-methionine = epoxyqueuosine(34) in tRNA + adenine + L-methionine + 2 H(+). It participates in tRNA modification; tRNA-queuosine biosynthesis. Transfers and isomerizes the ribose moiety from AdoMet to the 7-aminomethyl group of 7-deazaguanine (preQ1-tRNA) to give epoxyqueuosine (oQ-tRNA). The protein is S-adenosylmethionine:tRNA ribosyltransferase-isomerase of Listeria monocytogenes serotype 4a (strain HCC23).